The primary structure comprises 411 residues: Translation initiation factor 2 subunit gamma (411 aa).

In terms of domain architecture, tr-type G spans 9–203; it reads QAEVNIGMVG…AIEDFIPTPK (195 aa). Residues 18–25 form a G1 region; sequence GHVDHGKT. Mg(2+) contacts are provided by D21, T25, G46, and T48. Residue 21-26 participates in GTP binding; that stretch reads DHGKTT. The interval 46–50 is G2; that stretch reads GITIK. Positions 61, 64, 73, and 76 each coordinate Zn(2+). The tract at residues 90-93 is G3; that stretch reads DAPG. Residues 146 to 149 and 181 to 183 each bind GTP; these read NKIE and SAL. Residues 146–149 form a G4 region; it reads NKIE. Residues 181–183 form a G5 region; that stretch reads SAL.

It belongs to the TRAFAC class translation factor GTPase superfamily. Classic translation factor GTPase family. EIF2G subfamily. In terms of assembly, heterotrimer composed of an alpha, a beta and a gamma chain. It depends on Mg(2+) as a cofactor.

The enzyme catalyses GTP + H2O = GDP + phosphate + H(+). Functionally, eIF-2 functions in the early steps of protein synthesis by forming a ternary complex with GTP and initiator tRNA. This chain is Translation initiation factor 2 subunit gamma, found in Pyrococcus abyssi (strain GE5 / Orsay).